Consider the following 388-residue polypeptide: MELKSIKDAFDRVATKQKLSYSKTNEIVHMLSQEIDKALSILEETPSSDTMLLDHRSILADVKKVFMEIAPITQLEATEKELHAALTKYPKVLEKQLNPDISKAYRHNVEFDTHIVNQIIANFFYRQGMFDIGDCFVAETGESECSTRQSFVEMYRILEAMKRRDLEPALNWAVSNSDKLKEARSDLEMKLHSLHFLEIARGKNSKEAIDYARKHIATFADSCLPEIQKLMCSLLWNRKLDKSPYSEFLSPALWNNAVKELTRQYCNLLGESSESPLSITVTAGTQALPVLLKYMNVVMANKKLDWQTMEQLPVDAQLSEEFQFHSVFVCPVSKEQSSDDNPPMMMSCGHVLCKQTINKMSKNGSKSSFKCPYCPTDVDISRCRQLHF.

The 33-residue stretch at 112–144 folds into the LisH domain; sequence DTHIVNQIIANFFYRQGMFDIGDCFVAETGESE. In terms of domain architecture, CTLH spans 150-207; that stretch reads SFVEMYRILEAMKRRDLEPALNWAVSNSDKLKEARSDLEMKLHSLHFLEIARGKNSKE. The segment at 330 to 374 adopts an RING-Gid-type zinc-finger fold; sequence CPVSKEQSSDDNPPMMMSCGHVLCKQTINKMSKNGSKSSFKCPYC.

As to quaternary structure, interacts with RANBPM.

Its subcellular location is the cytoplasm. The polypeptide is Protein RMD5 homolog (Arabidopsis thaliana (Mouse-ear cress)).